The primary structure comprises 543 residues: Chaperonin GroEL (543 aa).

ATP-binding positions include 29–32 (TLGP), 86–90 (DGTTT), G413, 477–479 (DAL), and D493.

It belongs to the chaperonin (HSP60) family. As to quaternary structure, forms a cylinder of 14 subunits composed of two heptameric rings stacked back-to-back. Interacts with the co-chaperonin GroES.

It is found in the cytoplasm. It carries out the reaction ATP + H2O + a folded polypeptide = ADP + phosphate + an unfolded polypeptide.. Together with its co-chaperonin GroES, plays an essential role in assisting protein folding. The GroEL-GroES system forms a nano-cage that allows encapsulation of the non-native substrate proteins and provides a physical environment optimized to promote and accelerate protein folding. The protein is Chaperonin GroEL of Clostridium novyi (strain NT).